Here is a 196-residue protein sequence, read N- to C-terminus: Ribonuclease H (196 aa).

Residues Leu-58–Lys-196 form the RNase H type-1 domain. 4 residues coordinate Mg(2+): Asp-71, Glu-109, Asp-132, and Asp-192.

The protein belongs to the RNase H family. It depends on Mn(2+) as a cofactor. The cofactor is Mg(2+).

Its subcellular location is the cytoplasm. The catalysed reaction is Endonucleolytic cleavage to 5'-phosphomonoester.. Functionally, endonuclease that specifically degrades the RNA of RNA-DNA hybrids. This chain is Ribonuclease H (rnhA), found in Halalkalibacterium halodurans (strain ATCC BAA-125 / DSM 18197 / FERM 7344 / JCM 9153 / C-125) (Bacillus halodurans).